The following is a 150-amino-acid chain: Leukotriene C4 synthase (150 aa).

The Cytoplasmic portion of the chain corresponds to 1-6 (MKDEVA). A helical membrane pass occupies residues 7 to 27 (LLATVTLLGVLLQAYFSLQVI). Topologically, residues 28-48 (RARRAHRVSPPLTTGPPEFER) are lumenal. Position 30 (R30) interacts with glutathione. Catalysis depends on R31, which acts as the Proton donor. S36 bears the Phosphoserine mark. A helical transmembrane segment spans residues 49-69 (VYRAQVNCSEYFPLFLATLWV). Residues 51 to 55 (RAQVN) and 58 to 59 (EY) each bind glutathione. Over 70–73 (AGVY) the chain is Cytoplasmic. Residues 74-94 (FHEGAAALCGLVYLFTRLRYF) form a helical membrane-spanning segment. 93-97 (YFWGY) is a binding site for glutathione. Over 95 to 104 (WGYARSAQLR) the chain is Lumenal. R104 (proton acceptor) is an active-site residue. The chain crosses the membrane as a helical span at residues 105–124 (LAPLYASARALWLLLALATL). The Cytoplasmic segment spans residues 125–150 (GLLAHFLPAAARAALLRLLRALLRTA).

The protein belongs to the MAPEG family. In terms of assembly, homotrimer. Interacts with ALOX5AP and ALOX5. In terms of processing, phosphorylation at Ser-36 by RPS6KB1 inhibits the leukotriene-C4 synthase activity.

It localises to the nucleus outer membrane. Its subcellular location is the endoplasmic reticulum membrane. It is found in the nucleus membrane. The catalysed reaction is leukotriene C4 = leukotriene A4 + glutathione. The enzyme catalyses (13S,14S)-epoxy-(4Z,7Z,9E,11E,16Z,19Z)-docosahexaenoate + glutathione = (13R)-S-glutathionyl-(14S)-hydroxy-(4Z,7Z,9E,11E,16Z,19Z)-docosahexaenoate. It participates in lipid metabolism; leukotriene C4 biosynthesis. Its activity is regulated as follows. Inhibited by MK886. Functionally, catalyzes the conjugation of leukotriene A4 with reduced glutathione (GSH) to form leukotriene C4 with high specificity. Can also catalyze the transfer of a glutathionyl group from glutathione (GSH) to 13(S),14(S)-epoxy-docosahexaenoic acid to form maresin conjugate in tissue regeneration 1 (MCTR1), a bioactive lipid mediator that possess potent anti-inflammatory and proresolving actions. The polypeptide is Leukotriene C4 synthase (LTC4S) (Cavia porcellus (Guinea pig)).